The following is a 623-amino-acid chain: Interleukin-27 receptor subunit alpha (623 aa).

A signal peptide spans 1-24; it reads MNRLRVARLTPLELLLSLMSLLLG. The Extracellular portion of the chain corresponds to 25 to 510; the sequence is TRPHGSPGPL…HLPDNRIRWK (486 aa). Fibronectin type-III domains lie at 30–124 and 125–225; these read SPGP…MKPD and TPQI…TPFL. Asn46 is a glycosylation site (N-linked (GlcNAc...) asparagine). Positions 211–215 match the WSXWS motif motif; sequence WGEWS. N-linked (GlcNAc...) asparagine glycosylation is found at Asn296, Asn305, Asn360, Asn368, and Asn461. Fibronectin type-III domains follow at residues 316–412 and 413–505; these read APCD…VPLA and GPAV…LPDN. A helical transmembrane segment spans residues 511-531; sequence ALPWFLSLWGLLLMGCGLSLA. Residues 532–623 lie on the Cytoplasmic side of the membrane; the sequence is STRCLQARCL…PTPEELGLLV (92 aa). Positions 552–560 match the Box 1 motif motif; that stretch reads IWERVPDPA.

This sequence belongs to the type I cytokine receptor family. Type 2 subfamily. Expressed in CD4+ and CD8+ T-cells, B-cells, natural killer cells and macrophages. Highest levels in CD4+ T-cells and natural killer cells. Expression highest in Th0 cells.

Its subcellular location is the membrane. Its function is as follows. Receptor for IL27. Requires IL6ST/GP130 to mediate signal transduction in response to IL27. This signaling system acts through STAT3 and STAT1. Involved in the regulation of Th1-type immune responses. Also appears to be involved in innate defense mechanisms. This chain is Interleukin-27 receptor subunit alpha (Il27ra), found in Mus musculus (Mouse).